The chain runs to 622 residues: Low affinity potassium transport system protein Kup (622 aa).

A run of 12 helical transmembrane segments spans residues 9-29, 46-66, 101-121, 137-157, 165-185, 213-233, 247-267, 276-296, 337-357, 363-383, 395-415, and 416-436; these read LSAV…TSPL, PDVV…VVSV, ILVV…VITP, PALD…LFVI, VGKL…LLGL, VSFF…ALYA, WFTV…ALLL, PFFL…ATLA, IYIP…IIGF, LAAA…ILFC, FLVV…FSAN, and VLKL…MFII.

It belongs to the HAK/KUP transporter (TC 2.A.72) family.

It is found in the cell inner membrane. The enzyme catalyses K(+)(in) + H(+)(in) = K(+)(out) + H(+)(out). Its function is as follows. Responsible for the low-affinity transport of potassium into the cell. Likely operates as a K(+):H(+) symporter. The sequence is that of Low affinity potassium transport system protein Kup from Yersinia pestis (strain Pestoides F).